A 116-amino-acid polypeptide reads, in one-letter code: Small ribosomal subunit protein uS13 (116 aa).

The interval 92-116 is disordered; that stretch reads RRGLPVRGQNTKNNARTRKGTKRNR. Positions 106 to 116 are enriched in basic residues; it reads ARTRKGTKRNR.

Belongs to the universal ribosomal protein uS13 family. Part of the 30S ribosomal subunit. Forms a loose heterodimer with protein S19. Forms two bridges to the 50S subunit in the 70S ribosome.

Functionally, located at the top of the head of the 30S subunit, it contacts several helices of the 16S rRNA. In the 70S ribosome it contacts the 23S rRNA (bridge B1a) and protein L5 of the 50S subunit (bridge B1b), connecting the 2 subunits; these bridges are implicated in subunit movement. Contacts the tRNAs in the A and P-sites. The polypeptide is Small ribosomal subunit protein uS13 (Lactobacillus acidophilus (strain ATCC 700396 / NCK56 / N2 / NCFM)).